Reading from the N-terminus, the 222-residue chain is MPSLHVFYGGTFDPVHVGHLAIARAAHAALQAPIALIPSADPPHRPTPGSSSMDRLRMLQLAVSKEPGLSADPRELQRAARQNRSSYTVDTLTEVRSELGPKTSIIWLLGADAFVNLSNWKDWQMLPELTHLVIANRPGITLQTQLPPKMATVFNHRWVQDPATLRKTPHGHLWLLNQHPNPSSASKVRAAISAAAHWEADLTPEVAQYIRTHGLYGIHDIN.

Belongs to the NadD family.

It catalyses the reaction nicotinate beta-D-ribonucleotide + ATP + H(+) = deamido-NAD(+) + diphosphate. Its pathway is cofactor biosynthesis; NAD(+) biosynthesis; deamido-NAD(+) from nicotinate D-ribonucleotide: step 1/1. Functionally, catalyzes the reversible adenylation of nicotinate mononucleotide (NaMN) to nicotinic acid adenine dinucleotide (NaAD). This chain is Probable nicotinate-nucleotide adenylyltransferase, found in Xylella fastidiosa (strain M23).